Consider the following 105-residue polypeptide: Type VII secretion system extracellular protein D (105 aa).

In terms of assembly, forms heterodimers with EsxB.

It localises to the secreted. The polypeptide is Type VII secretion system extracellular protein D (Staphylococcus aureus (strain USA300)).